The chain runs to 210 residues: GRF1-interacting factor 1 (210 aa).

The segment covering 135–152 (ATLQHQQLHHSQLGMSSS) has biased composition (low complexity). The tract at residues 135 to 210 (ATLQHQQLHH…LYLKSSDDGN (76 aa)) is disordered. Residues 182–198 (GSGGGGEGRGGSSGDGG) show a composition bias toward gly residues.

This sequence belongs to the SS18 family. As to quaternary structure, interacts with GRF1, GRF2, GRF5 and GRF9. As to expression, strongly expressed in actively growing and developing tissues, such as roots, upper stems, and shoot tips and flower buds. Also expressed in mature flowers. Not expressed in the shoot apical meristem (SAM). Highly accumulated in the proximal part of leaf primordia, in the key proliferative zone at the junction region between the leaf blade and leaf petiole.

Its function is as follows. Transcription coactivator that plays a role in the regulation of cell expansion in leaf and cotyledons tissues. Component of a network formed by miR396, the GRFs and their interacting factors (GIFs) acting in the regulation of meristem function, at least partially through the control of cell proliferation. Appears to function synergistically with GRF1 as a transcriptional coactivator. Acts together with GRF5 for the development of appropriate leaf size and shape through the promotion and/or maintenance of cell proliferation activity in leaf primordia. Plays a role in adaxial/abaxial patterning and growth in leaf morphogenesis. GIFs are involved in the positive regulation of cell proliferation of lateral organs in a functionally redundant manner. Together with GATA18/HAN, mediates cotyledon identity by preventing ectopic root formation through the repression of PLT1 expression. This Arabidopsis thaliana (Mouse-ear cress) protein is GRF1-interacting factor 1.